Reading from the N-terminus, the 412-residue chain is NAD-dependent dihydropyrimidine dehydrogenase subunit PreT (412 aa).

An NAD(+)-binding site is contributed by Glu286.

This sequence belongs to the NADH dehydrogenase family. Heterotetramer of 2 PreA and 2 PreT subunits.

It carries out the reaction 5,6-dihydrouracil + NAD(+) = uracil + NADH + H(+). The enzyme catalyses 5,6-dihydrothymine + NAD(+) = thymine + NADH + H(+). Its function is as follows. Involved in pyrimidine base degradation. Catalyzes physiologically the reduction of uracil to 5,6-dihydrouracil (DHU) by using NADH as a specific cosubstrate. It also catalyzes the reverse reaction and the reduction of thymine to 5,6-dihydrothymine (DHT). The protein is NAD-dependent dihydropyrimidine dehydrogenase subunit PreT (preT) of Escherichia coli (strain K12).